A 137-amino-acid polypeptide reads, in one-letter code: Large ribosomal subunit protein uL16 (137 aa).

Belongs to the universal ribosomal protein uL16 family. Part of the 50S ribosomal subunit.

Binds 23S rRNA and is also seen to make contacts with the A and possibly P site tRNAs. The protein is Large ribosomal subunit protein uL16 of Maricaulis maris (strain MCS10) (Caulobacter maris).